Consider the following 323-residue polypeptide: Fructose-1,6-bisphosphatase class 1 (323 aa).

Residues Glu90, Asp111, Leu113, and Asp114 each contribute to the Mg(2+) site. Substrate is bound by residues 114–117, Tyr222, and Lys253; that span reads DGSS. Glu259 serves as a coordination point for Mg(2+).

Belongs to the FBPase class 1 family. In terms of assembly, homotetramer. Requires Mg(2+) as cofactor.

It is found in the cytoplasm. It carries out the reaction beta-D-fructose 1,6-bisphosphate + H2O = beta-D-fructose 6-phosphate + phosphate. It functions in the pathway carbohydrate biosynthesis; gluconeogenesis. This chain is Fructose-1,6-bisphosphatase class 1, found in Pelobacter propionicus (strain DSM 2379 / NBRC 103807 / OttBd1).